A 46-amino-acid polypeptide reads, in one-letter code: Toxin Up-1 (46 aa).

The protein resides in the secreted. Its subcellular location is the nematocyst. The protein localises to the target cell membrane. Its function is as follows. This toxin is a potent hemolysin devoid of enzymatic activity. Its hemolytic activity is inhibited by sphingomyelin but not by cholesterol. In erythrocyte membranes, it causes numerous cell membrane ruptures. It also exerces cytotoxicity to different cell lines. It exerces a positive inotropic effect. Also causes hemorrhage and necrosis by dilation of the blood vessels in the skin, and vascular leakage of fluids and rupture of alveolar walls of the lungs. Is a potent ichtyotoxin. May act as a pore-forming toxin. The polypeptide is Toxin Up-1 (Urticina piscivora (Fish-eating sea anemone)).